Here is a 541-residue protein sequence, read N- to C-terminus: Chaperonin GroEL 1 (541 aa).

ATP is bound by residues 29–32 (TLGP), 86–90 (DGTTT), glycine 413, 477–479 (NAA), and aspartate 493.

It belongs to the chaperonin (HSP60) family. As to quaternary structure, forms a cylinder of 14 subunits composed of two heptameric rings stacked back-to-back. Interacts with the co-chaperonin GroES.

Its subcellular location is the cytoplasm. It catalyses the reaction ATP + H2O + a folded polypeptide = ADP + phosphate + an unfolded polypeptide.. Its function is as follows. Together with its co-chaperonin GroES, plays an essential role in assisting protein folding. The GroEL-GroES system forms a nano-cage that allows encapsulation of the non-native substrate proteins and provides a physical environment optimized to promote and accelerate protein folding. The chain is Chaperonin GroEL 1 from Nocardioides sp. (strain ATCC BAA-499 / JS614).